Reading from the N-terminus, the 207-residue chain is Small ribosomal subunit protein uS4 (207 aa).

A disordered region spans residues K31–Q55. A compositionally biased stretch (polar residues) spans G42–G53. In terms of domain architecture, S4 RNA-binding spans S97–L160.

Belongs to the universal ribosomal protein uS4 family. In terms of assembly, part of the 30S ribosomal subunit. Contacts protein S5. The interaction surface between S4 and S5 is involved in control of translational fidelity.

One of the primary rRNA binding proteins, it binds directly to 16S rRNA where it nucleates assembly of the body of the 30S subunit. Its function is as follows. With S5 and S12 plays an important role in translational accuracy. This is Small ribosomal subunit protein uS4 from Burkholderia orbicola (strain MC0-3).